We begin with the raw amino-acid sequence, 283 residues long: Pantothenate synthetase (283 aa).

Residue 30-37 (MGNLHSGH) participates in ATP binding. H37 functions as the Proton donor in the catalytic mechanism. Q61 contacts (R)-pantoate. Q61 is a beta-alanine binding site. 149–152 (GEKD) contacts ATP. Q155 provides a ligand contact to (R)-pantoate. Residues V178 and 186-189 (LSSR) contribute to the ATP site.

The protein belongs to the pantothenate synthetase family. As to quaternary structure, homodimer.

It localises to the cytoplasm. The enzyme catalyses (R)-pantoate + beta-alanine + ATP = (R)-pantothenate + AMP + diphosphate + H(+). It participates in cofactor biosynthesis; (R)-pantothenate biosynthesis; (R)-pantothenate from (R)-pantoate and beta-alanine: step 1/1. Its function is as follows. Catalyzes the condensation of pantoate with beta-alanine in an ATP-dependent reaction via a pantoyl-adenylate intermediate. In Pseudomonas savastanoi pv. phaseolicola (strain 1448A / Race 6) (Pseudomonas syringae pv. phaseolicola (strain 1448A / Race 6)), this protein is Pantothenate synthetase.